Reading from the N-terminus, the 238-residue chain is Pyridoxine 5'-phosphate synthase (238 aa).

3-amino-2-oxopropyl phosphate is bound by residues N7 and R18. The Proton acceptor role is filled by H43. R45 and H50 together coordinate 1-deoxy-D-xylulose 5-phosphate. The Proton acceptor role is filled by E70. T100 serves as a coordination point for 1-deoxy-D-xylulose 5-phosphate. The active-site Proton donor is H190. 3-amino-2-oxopropyl phosphate is bound by residues D191 and G213–H214.

The protein belongs to the PNP synthase family. In terms of assembly, homooctamer; tetramer of dimers.

The protein localises to the cytoplasm. The catalysed reaction is 3-amino-2-oxopropyl phosphate + 1-deoxy-D-xylulose 5-phosphate = pyridoxine 5'-phosphate + phosphate + 2 H2O + H(+). It participates in cofactor biosynthesis; pyridoxine 5'-phosphate biosynthesis; pyridoxine 5'-phosphate from D-erythrose 4-phosphate: step 5/5. Its function is as follows. Catalyzes the complicated ring closure reaction between the two acyclic compounds 1-deoxy-D-xylulose-5-phosphate (DXP) and 3-amino-2-oxopropyl phosphate (1-amino-acetone-3-phosphate or AAP) to form pyridoxine 5'-phosphate (PNP) and inorganic phosphate. The chain is Pyridoxine 5'-phosphate synthase from Parabacteroides distasonis (strain ATCC 8503 / DSM 20701 / CIP 104284 / JCM 5825 / NCTC 11152).